We begin with the raw amino-acid sequence, 446 residues long: Neuropeptide Y receptor type 5 (446 aa).

Residues 1–42 (MGSEIPDYYNKTLASENNTVATRNSGFPVWEDYKGSVDDLQY) are Extracellular-facing. N10 and N17 each carry an N-linked (GlcNAc...) asparagine glycan. The chain crosses the membrane as a helical span at residues 43–63 (FLIGLYTFVSLLGFMGNLLIL). Residues 64-77 (MAVMRKRNQKTTVN) are Cytoplasmic-facing. The chain crosses the membrane as a helical span at residues 78–98 (FLIGNLAFSDILVVLFCSPFT). The Extracellular segment spans residues 99-117 (LTSVLLDQWMFGKVMCHIM). An intrachain disulfide couples C114 to C198. A helical membrane pass occupies residues 118 to 138 (PFLQCVTVLVSTLILISIAIV). At 139 to 156 (RYHMIKHPVSNNLTANHG) the chain is on the cytoplasmic side. Residues 157 to 177 (YFLIATVWTLGLAICSPLPVF) form a helical membrane-spanning segment. The Extracellular segment spans residues 178–208 (HSLVELQESFGSAWLSSRYLCVESWPSDSYR). The chain crosses the membrane as a helical span at residues 209–229 (IAFTISLLLVQYILPLVCLTV). The Cytoplasmic portion of the chain corresponds to 230-369 (SHTSVCRTIS…RKRSRSVFYR (140 aa)). Residues 297-325 (RPAPAGPALESREGRPPGKVGSMQSQPPP) form a disordered region. Residues 370–390 (LTVLILVFAVSWMPLHLFHVV) traverse the membrane as a helical segment. Topologically, residues 391 to 407 (TDFNDNLISNRHFKLVY) are extracellular. A helical transmembrane segment spans residues 408 to 428 (CICHLLGMMSCCLNPILYGFL). Residues 429–446 (NNGIKADLMSLIHCLHVS) are Cytoplasmic-facing. The S-palmitoyl cysteine moiety is linked to residue C442.

It belongs to the G-protein coupled receptor 1 family.

The protein resides in the cell membrane. In terms of biological role, receptor for neuropeptide Y and peptide YY. The activity of this receptor is mediated by G proteins that inhibit adenylate cyclase activity. Seems to be associated with food intake. Could be involved in feeding disorders. The sequence is that of Neuropeptide Y receptor type 5 (NPY5R) from Sus scrofa (Pig).